The primary structure comprises 427 residues: UPF0597 protein CD630_32320 (427 aa).

This sequence belongs to the UPF0597 family.

The sequence is that of UPF0597 protein CD630_32320 from Clostridioides difficile (strain 630) (Peptoclostridium difficile).